The chain runs to 570 residues: Urease subunit alpha (570 aa).

Residues 135-570 form the Urease domain; that stretch reads GGLDIHIHFN…ELPLAKRYSL (436 aa). 3 residues coordinate Ni(2+): H140, H142, and K219. K219 is subject to N6-carboxylysine. Residue H221 participates in substrate binding. Residues H248 and H274 each coordinate Ni(2+). The Proton donor role is filled by H322. D362 is a Ni(2+) binding site.

The protein belongs to the metallo-dependent hydrolases superfamily. Urease alpha subunit family. Heterotrimer of UreA (gamma), UreB (beta) and UreC (alpha) subunits. Three heterotrimers associate to form the active enzyme. It depends on Ni cation as a cofactor. In terms of processing, carboxylation allows a single lysine to coordinate two nickel ions.

It is found in the cytoplasm. The enzyme catalyses urea + 2 H2O + H(+) = hydrogencarbonate + 2 NH4(+). It functions in the pathway nitrogen metabolism; urea degradation; CO(2) and NH(3) from urea (urease route): step 1/1. The polypeptide is Urease subunit alpha (Haloquadratum walsbyi (strain DSM 16790 / HBSQ001)).